A 319-amino-acid polypeptide reads, in one-letter code: Epoxyqueuosine reductase (319 aa).

The active-site Proton donor is D146. Residues 188–220 (ASLPADQPARSLCGHCQRCLPACPTAAITEPFV) form the 4Fe-4S ferredoxin-type domain. C200, C203, C206, C210, C226, C250, C253, and C257 together coordinate [4Fe-4S] cluster.

The protein belongs to the QueG family. Monomer. Requires cob(II)alamin as cofactor. [4Fe-4S] cluster serves as cofactor.

The protein resides in the cytoplasm. The catalysed reaction is epoxyqueuosine(34) in tRNA + AH2 = queuosine(34) in tRNA + A + H2O. It participates in tRNA modification; tRNA-queuosine biosynthesis. Its function is as follows. Catalyzes the conversion of epoxyqueuosine (oQ) to queuosine (Q), which is a hypermodified base found in the wobble positions of tRNA(Asp), tRNA(Asn), tRNA(His) and tRNA(Tyr). This Synechococcus sp. (strain RCC307) protein is Epoxyqueuosine reductase.